A 231-amino-acid polypeptide reads, in one-letter code: Adenosylcobinamide-GDP ribazoletransferase (231 aa).

The next 5 membrane-spanning stretches (helical) occupy residues 28–48 (LWLF…PHFI), 97–117 (TGAG…TLLY), 121–141 (FWEI…LMLL), 162–182 (VFIG…ESLA), and 209–229 (VIGS…TIAG).

This sequence belongs to the CobS family. It depends on Mg(2+) as a cofactor.

It localises to the cell membrane. It carries out the reaction alpha-ribazole + adenosylcob(III)inamide-GDP = adenosylcob(III)alamin + GMP + H(+). The enzyme catalyses alpha-ribazole 5'-phosphate + adenosylcob(III)inamide-GDP = adenosylcob(III)alamin 5'-phosphate + GMP + H(+). Its pathway is cofactor biosynthesis; adenosylcobalamin biosynthesis; adenosylcobalamin from cob(II)yrinate a,c-diamide: step 7/7. In terms of biological role, joins adenosylcobinamide-GDP and alpha-ribazole to generate adenosylcobalamin (Ado-cobalamin). Also synthesizes adenosylcobalamin 5'-phosphate from adenosylcobinamide-GDP and alpha-ribazole 5'-phosphate. The polypeptide is Adenosylcobinamide-GDP ribazoletransferase (cobS2) (Archaeoglobus fulgidus (strain ATCC 49558 / DSM 4304 / JCM 9628 / NBRC 100126 / VC-16)).